A 184-amino-acid polypeptide reads, in one-letter code: Sec-independent protein translocase protein TatB (184 aa).

Residues 1 to 21 form a helical membrane-spanning segment; sequence MFDIGFSELVLLFVVGLIVLG. Positions 149 to 168 are enriched in acidic residues; that stretch reads AEEGEPMLEMGESDFSEDEQ. Residues 149 to 184 form a disordered region; the sequence is AEEGEPMLEMGESDFSEDEQATASSNETIENIKEKV.

The protein belongs to the TatB family. In terms of assembly, the Tat system comprises two distinct complexes: a TatABC complex, containing multiple copies of TatA, TatB and TatC subunits, and a separate TatA complex, containing only TatA subunits. Substrates initially bind to the TatABC complex, which probably triggers association of the separate TatA complex to form the active translocon.

It is found in the cell inner membrane. In terms of biological role, part of the twin-arginine translocation (Tat) system that transports large folded proteins containing a characteristic twin-arginine motif in their signal peptide across membranes. Together with TatC, TatB is part of a receptor directly interacting with Tat signal peptides. TatB may form an oligomeric binding site that transiently accommodates folded Tat precursor proteins before their translocation. This is Sec-independent protein translocase protein TatB from Histophilus somni (strain 129Pt) (Haemophilus somnus).